The primary structure comprises 337 residues: Holliday junction branch migration complex subunit RuvB (337 aa).

Positions 4–184 are large ATPase domain (RuvB-L); it reads QDRIISAELK…FGIVQRLEFY (181 aa). ATP is bound by residues Ile23, Arg24, Gly65, Lys68, Thr69, Thr70, 131–133, Arg174, Tyr184, and Arg221; that span reads EDY. Thr69 contacts Mg(2+). Residues 185-255 are small ATPAse domain (RuvB-S); that stretch reads DVESLTTIVA…VAQRALDMLS (71 aa). The interval 258 to 337 is head domain (RuvB-H); the sequence is SQGFDHLDRR…FNYQLPSDFK (80 aa). Positions 313 and 318 each coordinate DNA.

Belongs to the RuvB family. In terms of assembly, homohexamer. Forms an RuvA(8)-RuvB(12)-Holliday junction (HJ) complex. HJ DNA is sandwiched between 2 RuvA tetramers; dsDNA enters through RuvA and exits via RuvB. An RuvB hexamer assembles on each DNA strand where it exits the tetramer. Each RuvB hexamer is contacted by two RuvA subunits (via domain III) on 2 adjacent RuvB subunits; this complex drives branch migration. In the full resolvosome a probable DNA-RuvA(4)-RuvB(12)-RuvC(2) complex forms which resolves the HJ.

Its subcellular location is the cytoplasm. It carries out the reaction ATP + H2O = ADP + phosphate + H(+). In terms of biological role, the RuvA-RuvB-RuvC complex processes Holliday junction (HJ) DNA during genetic recombination and DNA repair, while the RuvA-RuvB complex plays an important role in the rescue of blocked DNA replication forks via replication fork reversal (RFR). RuvA specifically binds to HJ cruciform DNA, conferring on it an open structure. The RuvB hexamer acts as an ATP-dependent pump, pulling dsDNA into and through the RuvAB complex. RuvB forms 2 homohexamers on either side of HJ DNA bound by 1 or 2 RuvA tetramers; 4 subunits per hexamer contact DNA at a time. Coordinated motions by a converter formed by DNA-disengaged RuvB subunits stimulates ATP hydrolysis and nucleotide exchange. Immobilization of the converter enables RuvB to convert the ATP-contained energy into a lever motion, pulling 2 nucleotides of DNA out of the RuvA tetramer per ATP hydrolyzed, thus driving DNA branch migration. The RuvB motors rotate together with the DNA substrate, which together with the progressing nucleotide cycle form the mechanistic basis for DNA recombination by continuous HJ branch migration. Branch migration allows RuvC to scan DNA until it finds its consensus sequence, where it cleaves and resolves cruciform DNA. The sequence is that of Holliday junction branch migration complex subunit RuvB from Marinomonas sp. (strain MWYL1).